A 435-amino-acid polypeptide reads, in one-letter code: Serine--tRNA ligase (435 aa).

239-241 (TAE) lines the L-serine pocket. ATP is bound at residue 270–272 (RAE). Glu-293 contributes to the L-serine binding site. Residue 357–360 (EISS) coordinates ATP. An L-serine-binding site is contributed by Ser-393.

Belongs to the class-II aminoacyl-tRNA synthetase family. Type-1 seryl-tRNA synthetase subfamily. Homodimer. The tRNA molecule binds across the dimer.

Its subcellular location is the cytoplasm. It carries out the reaction tRNA(Ser) + L-serine + ATP = L-seryl-tRNA(Ser) + AMP + diphosphate + H(+). The catalysed reaction is tRNA(Sec) + L-serine + ATP = L-seryl-tRNA(Sec) + AMP + diphosphate + H(+). It participates in aminoacyl-tRNA biosynthesis; selenocysteinyl-tRNA(Sec) biosynthesis; L-seryl-tRNA(Sec) from L-serine and tRNA(Sec): step 1/1. Functionally, catalyzes the attachment of serine to tRNA(Ser). Is also able to aminoacylate tRNA(Sec) with serine, to form the misacylated tRNA L-seryl-tRNA(Sec), which will be further converted into selenocysteinyl-tRNA(Sec). The polypeptide is Serine--tRNA ligase (Parvibaculum lavamentivorans (strain DS-1 / DSM 13023 / NCIMB 13966)).